Here is a 179-residue protein sequence, read N- to C-terminus: Large ribosomal subunit protein uL5 (179 aa).

It belongs to the universal ribosomal protein uL5 family. As to quaternary structure, part of the 50S ribosomal subunit; part of the 5S rRNA/L5/L18/L25 subcomplex. Contacts the 5S rRNA and the P site tRNA. Forms a bridge to the 30S subunit in the 70S ribosome.

In terms of biological role, this is one of the proteins that bind and probably mediate the attachment of the 5S RNA into the large ribosomal subunit, where it forms part of the central protuberance. In the 70S ribosome it contacts protein S13 of the 30S subunit (bridge B1b), connecting the 2 subunits; this bridge is implicated in subunit movement. Contacts the P site tRNA; the 5S rRNA and some of its associated proteins might help stabilize positioning of ribosome-bound tRNAs. This chain is Large ribosomal subunit protein uL5, found in Trichlorobacter lovleyi (strain ATCC BAA-1151 / DSM 17278 / SZ) (Geobacter lovleyi).